The sequence spans 189 residues: MKKTTSLLIAALAVAPLAHAAEGGFVGGLMYAATDPVTFVAFLCMVTFLLIAARMGAFKTILGGLDTRASNIRKELEEAASLREQAAEALALAERRAQDADKEAEAIIDQAKRDAKAMLEEARRDLAEKISRREAQAAARITRAETEATSEVRRAAADAATAAARRILSEQTSVDQFEAAARDIERALS.

Residues 7–27 (LLIAALAVAPLAHAAEGGFVG) traverse the membrane as a helical segment.

This sequence belongs to the ATPase B chain family. As to quaternary structure, F-type ATPases have 2 components, F(1) - the catalytic core - and F(0) - the membrane proton channel. F(1) has five subunits: alpha(3), beta(3), gamma(1), delta(1), epsilon(1). F(0) has three main subunits: a(1), b(2) and c(10-14). The alpha and beta chains form an alternating ring which encloses part of the gamma chain. F(1) is attached to F(0) by a central stalk formed by the gamma and epsilon chains, while a peripheral stalk is formed by the delta and b chains.

Its subcellular location is the cell inner membrane. F(1)F(0) ATP synthase produces ATP from ADP in the presence of a proton or sodium gradient. F-type ATPases consist of two structural domains, F(1) containing the extramembraneous catalytic core and F(0) containing the membrane proton channel, linked together by a central stalk and a peripheral stalk. During catalysis, ATP synthesis in the catalytic domain of F(1) is coupled via a rotary mechanism of the central stalk subunits to proton translocation. Its function is as follows. Component of the F(0) channel, it forms part of the peripheral stalk, linking F(1) to F(0). The sequence is that of ATP synthase subunit b from Hyphomonas neptunium (strain ATCC 15444).